The chain runs to 368 residues: D-Ala-D/L-Ala epimerase (368 aa).

Substrate-binding positions include threonine 135 and 160–162 (KVK). Positions 190, 216, and 241 each coordinate Mg(2+). Residues lysine 265 and 318–320 (DFD) contribute to the substrate site.

It belongs to the mandelate racemase/muconate lactonizing enzyme family. The cofactor is Mg(2+).

Functionally, catalyzes the epimerization of D-Ala-D-Ala to D-Ala-L-Ala. Has broad substrate specificity and catalyzes the epimerization of a variety of dipeptides containing an N-terminal Ala followed by a hydrophobic or polar residue, such as Val, Ser and Met (in vitro). This chain is D-Ala-D/L-Ala epimerase (tfdD), found in Cytophaga hutchinsonii (strain ATCC 33406 / DSM 1761 / CIP 103989 / NBRC 15051 / NCIMB 9469 / D465).